Consider the following 201-residue polypeptide: Lipopolysaccharide core heptose(II)-phosphate phosphatase (201 aa).

Positions 1 to 35 (MLAFILRFIKNKSYFALLAGAWVIIAGLTSQHAWS) are cleaved as a signal peptide.

This sequence belongs to the phosphoglycerate mutase family. Ais subfamily.

It is found in the periplasm. The protein operates within bacterial outer membrane biogenesis; lipopolysaccharide metabolism. Functionally, catalyzes the dephosphorylation of heptose(II) of the outer membrane lipopolysaccharide core. In Salmonella arizonae (strain ATCC BAA-731 / CDC346-86 / RSK2980), this protein is Lipopolysaccharide core heptose(II)-phosphate phosphatase.